Consider the following 445-residue polypeptide: Proline--tRNA ligase (445 aa).

The protein belongs to the class-II aminoacyl-tRNA synthetase family. ProS type 2 subfamily. Homodimer.

Its subcellular location is the cytoplasm. The enzyme catalyses tRNA(Pro) + L-proline + ATP = L-prolyl-tRNA(Pro) + AMP + diphosphate. Its function is as follows. Catalyzes the attachment of proline to tRNA(Pro) in a two-step reaction: proline is first activated by ATP to form Pro-AMP and then transferred to the acceptor end of tRNA(Pro). The protein is Proline--tRNA ligase of Caulobacter sp. (strain K31).